A 204-amino-acid chain; its full sequence is uncharacterized protein (204 aa).

A disordered region spans residues A77–L111. Basic residues predominate over residues G85–R95. The segment covering R96–G105 has biased composition (low complexity).

This is an uncharacterized protein from Homo sapiens (Human).